Here is a 492-residue protein sequence, read N- to C-terminus: Ketol-acid reductoisomerase (NADP(+)) (492 aa).

The KARI N-terminal Rossmann domain occupies 17 to 208; sequence LGQCRLMKKN…GSNKAGVLES (192 aa). NADP(+)-binding positions include 45–48, Arg-68, Ser-76, and Ser-78; that span reads CGSQ. His-132 is an active-site residue. Gly-158 lines the NADP(+) pocket. KARI C-terminal knotted domains are found at residues 209-344 and 345-487; these read SFVA…KAPV and YCET…MKDM. Residues Asp-217, Glu-221, Glu-389, and Glu-393 each contribute to the Mg(2+) site. Residue Ser-414 coordinates substrate.

Belongs to the ketol-acid reductoisomerase family. Mg(2+) serves as cofactor.

The catalysed reaction is (2R)-2,3-dihydroxy-3-methylbutanoate + NADP(+) = (2S)-2-acetolactate + NADPH + H(+). It catalyses the reaction (2R,3R)-2,3-dihydroxy-3-methylpentanoate + NADP(+) = (S)-2-ethyl-2-hydroxy-3-oxobutanoate + NADPH + H(+). It functions in the pathway amino-acid biosynthesis; L-isoleucine biosynthesis; L-isoleucine from 2-oxobutanoate: step 2/4. The protein operates within amino-acid biosynthesis; L-valine biosynthesis; L-valine from pyruvate: step 2/4. Its function is as follows. Involved in the biosynthesis of branched-chain amino acids (BCAA). Catalyzes an alkyl-migration followed by a ketol-acid reduction of (S)-2-acetolactate (S2AL) to yield (R)-2,3-dihydroxy-isovalerate. In the isomerase reaction, S2AL is rearranged via a Mg-dependent methyl migration to produce 3-hydroxy-3-methyl-2-ketobutyrate (HMKB). In the reductase reaction, this 2-ketoacid undergoes a metal-dependent reduction by NADPH to yield (R)-2,3-dihydroxy-isovalerate. This Blochmanniella floridana protein is Ketol-acid reductoisomerase (NADP(+)).